A 279-amino-acid polypeptide reads, in one-letter code: Phosphate-binding protein PstS (279 aa).

An N-terminal signal peptide occupies residues 1–18 (MKKVIILIFMLSTSLLYN). Cys19 carries the N-palmitoyl cysteine lipid modification. Cys19 carries S-diacylglycerol cysteine lipidation. Residues 33 to 35 (STT), Ser63, and 151 to 153 (SGS) each bind phosphate.

Belongs to the PstS family. Monomer (in vitro). The complex is composed of two ATP-binding proteins (PstB), two transmembrane proteins (PstC and PstA) and a solute-binding protein (PstS).

The protein resides in the cell membrane. Its function is as follows. Binds inorganic phosphate with a Kd of 1.2 uM. Part of the ABC transporter complex PstSACB involved in phosphate import. This chain is Phosphate-binding protein PstS, found in Borreliella burgdorferi (strain ATCC 35210 / DSM 4680 / CIP 102532 / B31) (Borrelia burgdorferi).